The following is a 366-amino-acid chain: Type 2 DNA topoisomerase 6 subunit A (366 aa).

The region spanning 7-146 is the Topo IIA-type catalytic domain; that stretch reads SDETEARDQL…FHMRPEESGA (140 aa). Y101 serves as the catalytic O-(5'-phospho-DNA)-tyrosine intermediate. Mg(2+) is bound by residues E199 and D251.

This sequence belongs to the TOP6A family. As to quaternary structure, homodimer. Heterotetramer of two Top6A and two Top6B chains. Mg(2+) is required as a cofactor.

The enzyme catalyses ATP-dependent breakage, passage and rejoining of double-stranded DNA.. Functionally, relaxes both positive and negative superturns and exhibits a strong decatenase activity. The chain is Type 2 DNA topoisomerase 6 subunit A from Halobacterium salinarum (strain ATCC 700922 / JCM 11081 / NRC-1) (Halobacterium halobium).